The sequence spans 551 residues: Thermolysin (551 aa).

Positions 1–31 (MKRKMKMKLVRFGLAAGLAAQVFFLPYNALA) are cleaved as a signal peptide. A propeptide spans 32-235 (STEHVTWNQQ…DAAKPGDVKS (204 aa)) (activation peptide). 4 residues coordinate Ca(2+): D292, D294, Q296, and D373. H377 contacts Zn(2+). E378 is an active-site residue. 2 residues coordinate Zn(2+): H381 and E401. Ca(2+) is bound by residues E412, N418, D420, E422, E425, T429, I432, and D435. H466 functions as the Proton donor in the catalytic mechanism.

Belongs to the peptidase M4 family. It depends on Ca(2+) as a cofactor. Requires Zn(2+) as cofactor.

Its subcellular location is the secreted. It catalyses the reaction Preferential cleavage: Xaa-|-Leu &gt; Xaa-|-Phe.. Functionally, extracellular zinc metalloprotease. The protein is Thermolysin (nprS) of Geobacillus stearothermophilus (Bacillus stearothermophilus).